Reading from the N-terminus, the 262-residue chain is Cytochrome c oxidase subunit 3 (262 aa).

7 helical membrane passes run 11–31 (LVEP…LTVG), 32–52 (LVMW…VMIV), 83–103 (GMVL…WAFF), 125–147 (LNAF…TVTW), 160–180 (AIQS…LQAW), 198–218 (FFVA…FLMV), and 240–260 (AWYW…IYWW).

The protein belongs to the cytochrome c oxidase subunit 3 family. As to quaternary structure, component of the cytochrome c oxidase (complex IV, CIV), a multisubunit enzyme composed of a catalytic core of 3 subunits and several supernumerary subunits. The complex exists as a monomer or a dimer and forms supercomplexes (SCs) in the inner mitochondrial membrane with ubiquinol-cytochrome c oxidoreductase (cytochrome b-c1 complex, complex III, CIII).

It localises to the mitochondrion inner membrane. The enzyme catalyses 4 Fe(II)-[cytochrome c] + O2 + 8 H(+)(in) = 4 Fe(III)-[cytochrome c] + 2 H2O + 4 H(+)(out). In terms of biological role, component of the cytochrome c oxidase, the last enzyme in the mitochondrial electron transport chain which drives oxidative phosphorylation. The respiratory chain contains 3 multisubunit complexes succinate dehydrogenase (complex II, CII), ubiquinol-cytochrome c oxidoreductase (cytochrome b-c1 complex, complex III, CIII) and cytochrome c oxidase (complex IV, CIV), that cooperate to transfer electrons derived from NADH and succinate to molecular oxygen, creating an electrochemical gradient over the inner membrane that drives transmembrane transport and the ATP synthase. Cytochrome c oxidase is the component of the respiratory chain that catalyzes the reduction of oxygen to water. Electrons originating from reduced cytochrome c in the intermembrane space (IMS) are transferred via the dinuclear copper A center (CU(A)) of subunit 2 and heme A of subunit 1 to the active site in subunit 1, a binuclear center (BNC) formed by heme A3 and copper B (CU(B)). The BNC reduces molecular oxygen to 2 water molecules using 4 electrons from cytochrome c in the IMS and 4 protons from the mitochondrial matrix. The polypeptide is Cytochrome c oxidase subunit 3 (COIII) (Branchiostoma floridae (Florida lancelet)).